Consider the following 103-residue polypeptide: Pyrimidine/purine nucleoside phosphorylase (103 aa).

This sequence belongs to the nucleoside phosphorylase PpnP family.

The catalysed reaction is a purine D-ribonucleoside + phosphate = a purine nucleobase + alpha-D-ribose 1-phosphate. It carries out the reaction adenosine + phosphate = alpha-D-ribose 1-phosphate + adenine. It catalyses the reaction cytidine + phosphate = cytosine + alpha-D-ribose 1-phosphate. The enzyme catalyses guanosine + phosphate = alpha-D-ribose 1-phosphate + guanine. The catalysed reaction is inosine + phosphate = alpha-D-ribose 1-phosphate + hypoxanthine. It carries out the reaction thymidine + phosphate = 2-deoxy-alpha-D-ribose 1-phosphate + thymine. It catalyses the reaction uridine + phosphate = alpha-D-ribose 1-phosphate + uracil. The enzyme catalyses xanthosine + phosphate = alpha-D-ribose 1-phosphate + xanthine. Its function is as follows. Catalyzes the phosphorolysis of diverse nucleosides, yielding D-ribose 1-phosphate and the respective free bases. Can use uridine, adenosine, guanosine, cytidine, thymidine, inosine and xanthosine as substrates. Also catalyzes the reverse reactions. The polypeptide is Pyrimidine/purine nucleoside phosphorylase (Shewanella oneidensis (strain ATCC 700550 / JCM 31522 / CIP 106686 / LMG 19005 / NCIMB 14063 / MR-1)).